Reading from the N-terminus, the 116-residue chain is Large ribosomal subunit protein bL17 (116 aa).

The protein belongs to the bacterial ribosomal protein bL17 family. Part of the 50S ribosomal subunit. Contacts protein L32.

This is Large ribosomal subunit protein bL17 from Trichormus variabilis (strain ATCC 29413 / PCC 7937) (Anabaena variabilis).